Here is a 568-residue protein sequence, read N- to C-terminus: Oxygen-dependent choline dehydrogenase (568 aa).

6-35 (DYIIVGAGSAGCVLADRLSASGEHYILLLE) contacts FAD. The active-site Proton acceptor is the H470.

It belongs to the GMC oxidoreductase family. It depends on FAD as a cofactor.

The catalysed reaction is choline + A = betaine aldehyde + AH2. The enzyme catalyses betaine aldehyde + NAD(+) + H2O = glycine betaine + NADH + 2 H(+). It functions in the pathway amine and polyamine biosynthesis; betaine biosynthesis via choline pathway; betaine aldehyde from choline (cytochrome c reductase route): step 1/1. Functionally, involved in the biosynthesis of the osmoprotectant glycine betaine. Catalyzes the oxidation of choline to betaine aldehyde and betaine aldehyde to glycine betaine at the same rate. This chain is Oxygen-dependent choline dehydrogenase, found in Photobacterium profundum (strain SS9).